A 464-amino-acid chain; its full sequence is MMARRDPKSWAKRLVRAQTLQKQRRAPVGPRSPPPDEEDPRLKCKNCGAFGHTARSTRCPMKCWKAALVPATLGKKEGKENLKPWKPRAEANPGPLNKDKGEKEERPRQQDPQRNALLHMFSGKPPEKPLPNGKGSTESSEHLRVASGPMPVHTTSKRPRVDPVLADRSATEMSGRGSVLASLSPLRKASLSSSSSLGPKERQTGAAADIPQPAFRHQGPEPLLVVKPTHSSPEGGCREVPQAASKTHGLLQAVRPQAQDKRPAVTSQPCPPAATHSLGLGSNLSFGPGAKRPAQAPIQACLNFPKKPRLGPFQIPESAIQGGELRAPENLQPPPAATELGPSTSPQMGRRTPAQVPSVDRQPPHSTPCLPTAQACTMSHHPAAGHDGAQPLRVLFRRLENGRWSSSLLAAPSFHSPEKPGAFLAQSPHVSEKSEAPCVRVPPSVLYEDLQVSSSSEDSDSDLE.

3 disordered regions span residues 1–42 (MMAR…DPRL), 69–387 (VPAT…AGHD), and 410–437 (AAPSFHSPEKPGAFLAQSPHVSEKSEAP). 2 stretches are compositionally biased toward basic and acidic residues: residues 74–89 (GKKEGKENLKPWKPRA) and 97–111 (NKDKGEKEERPRQQD). Residues 180-197 (LASLSPLRKASLSSSSSL) are compositionally biased toward low complexity.

This sequence belongs to the FAM90 family.

This Homo sapiens (Human) protein is Protein FAM90A7.